The sequence spans 335 residues: N-acetyl-gamma-glutamyl-phosphate reductase (335 aa).

C156 is an active-site residue.

The protein belongs to the NAGSA dehydrogenase family. Type 1 subfamily.

It is found in the cytoplasm. The enzyme catalyses N-acetyl-L-glutamate 5-semialdehyde + phosphate + NADP(+) = N-acetyl-L-glutamyl 5-phosphate + NADPH + H(+). It participates in amino-acid biosynthesis; L-arginine biosynthesis; N(2)-acetyl-L-ornithine from L-glutamate: step 3/4. Functionally, catalyzes the NADPH-dependent reduction of N-acetyl-5-glutamyl phosphate to yield N-acetyl-L-glutamate 5-semialdehyde. This chain is N-acetyl-gamma-glutamyl-phosphate reductase, found in Tolumonas auensis (strain DSM 9187 / NBRC 110442 / TA 4).